A 486-amino-acid polypeptide reads, in one-letter code: Alliin lyase 1 (486 aa).

The signal sequence occupies residues 1-28; sequence MVESYKKIGSCNKMPCLVILTCIIMSNS. Residues 29 to 38 constitute a propeptide that is removed on maturation; it reads LVNNNNMVQA. In terms of domain architecture, EGF-like; atypical spans 51 to 97; sequence EAVANINCSEHGRAFLDGIISEGSPKCECNTCYTGPDCSEKIQGCSA. N57 carries an N-linked (GlcNAc...) asparagine glycan. Intrachain disulfides connect C58-C77, C79-C88, and C82-C95. Residue 130–138 coordinates chloride; that stretch reads YFFNPVSNF. N-linked (GlcNAc...) asparagine glycans are attached at residues N184 and N229. At K289 the chain carries N6-(pyridoxal phosphate)lysine. The N-linked (GlcNAc...) asparagine glycan is linked to N366. A disulfide bond links C406 and C414.

Belongs to the alliinase family. In terms of assembly, homodimer. Requires pyridoxal 5'-phosphate as cofactor. As to expression, expressed in bulb (at protein level). Expressed in shoots.

It is found in the vacuole. It catalyses the reaction an S-alkyl-L-cysteine S-oxide = an S-alkyl sulfenate + 2-aminoprop-2-enoate. In terms of biological role, able to cleave the C-S bond of sulfoxide derivatives of Cys to produce allicin, thus giving rise to all sulfur compounds which are responsible for most of the properties of garlic, such as the specific smell and flavor as well as the health benefits like blood lipid or blood pressure lowering. The protein is Alliin lyase 1 of Allium sativum (Garlic).